The sequence spans 136 residues: UPF0216 protein PH0358 (136 aa).

Belongs to the UPF0216 family.

The chain is UPF0216 protein PH0358 from Pyrococcus horikoshii (strain ATCC 700860 / DSM 12428 / JCM 9974 / NBRC 100139 / OT-3).